The primary structure comprises 102 residues: Small ribosomal subunit protein uS10 (102 aa).

The protein belongs to the universal ribosomal protein uS10 family. In terms of assembly, part of the 30S ribosomal subunit.

Functionally, involved in the binding of tRNA to the ribosomes. The polypeptide is Small ribosomal subunit protein uS10 (Streptococcus uberis (strain ATCC BAA-854 / 0140J)).